The chain runs to 142 residues: Large ribosomal subunit protein uL11 (142 aa).

It belongs to the universal ribosomal protein uL11 family. In terms of assembly, part of the ribosomal stalk of the 50S ribosomal subunit. Interacts with L10 and the large rRNA to form the base of the stalk. L10 forms an elongated spine to which L12 dimers bind in a sequential fashion forming a multimeric L10(L12)X complex. In terms of processing, one or more lysine residues are methylated.

Functionally, forms part of the ribosomal stalk which helps the ribosome interact with GTP-bound translation factors. This Rhodospirillum rubrum (strain ATCC 11170 / ATH 1.1.1 / DSM 467 / LMG 4362 / NCIMB 8255 / S1) protein is Large ribosomal subunit protein uL11.